Here is a 506-residue protein sequence, read N- to C-terminus: Cytochrome P450 52B1 (506 aa).

Position 451 (C451) interacts with heme.

The protein belongs to the cytochrome P450 family. Heme is required as a cofactor.

Together with an NADPH cytochrome P450 the enzyme system catalyzes the terminal hydroxylation as the first step in the assimilation of alkanes and fatty acids. The chain is Cytochrome P450 52B1 (CYP52B1) from Candida tropicalis (Yeast).